We begin with the raw amino-acid sequence, 136 residues long: Cytidine deaminase (136 aa).

The CMP/dCMP-type deaminase domain occupies methionine 1–glutamate 128. Substrate is bound at residue asparagine 42–glutamate 44. A Zn(2+)-binding site is contributed by cysteine 53. The active-site Proton donor is the glutamate 55. Zn(2+)-binding residues include cysteine 86 and cysteine 89.

This sequence belongs to the cytidine and deoxycytidylate deaminase family. Zn(2+) is required as a cofactor.

The enzyme catalyses cytidine + H2O + H(+) = uridine + NH4(+). The catalysed reaction is 2'-deoxycytidine + H2O + H(+) = 2'-deoxyuridine + NH4(+). In terms of biological role, this enzyme scavenges exogenous and endogenous cytidine and 2'-deoxycytidine for UMP synthesis. The protein is Cytidine deaminase (cdd) of Sporosarcina psychrophila (Bacillus psychrophilus).